Reading from the N-terminus, the 72-residue chain is Small ribosomal subunit protein bS18 (72 aa).

It belongs to the bacterial ribosomal protein bS18 family. Part of the 30S ribosomal subunit. Forms a tight heterodimer with protein bS6.

In terms of biological role, binds as a heterodimer with protein bS6 to the central domain of the 16S rRNA, where it helps stabilize the platform of the 30S subunit. This Aquifex aeolicus (strain VF5) protein is Small ribosomal subunit protein bS18.